A 334-amino-acid polypeptide reads, in one-letter code: Inositol 2-dehydrogenase (334 aa).

This sequence belongs to the Gfo/Idh/MocA family. In terms of assembly, homotetramer.

It catalyses the reaction myo-inositol + NAD(+) = scyllo-inosose + NADH + H(+). Involved in the oxidation of myo-inositol (MI) to 2-keto-myo-inositol (2KMI or 2-inosose). This Cereibacter sphaeroides (strain ATCC 17029 / ATH 2.4.9) (Rhodobacter sphaeroides) protein is Inositol 2-dehydrogenase.